Consider the following 69-residue polypeptide: Cap-specific mRNA (nucleoside-2'-O-)-methyltransferase (69 aa).

Tyr-22 is an mRNA binding site. Residues Gln-39, Tyr-66, and Gly-68 each contribute to the S-adenosyl-L-methionine site.

It belongs to the class I-like SAM-binding methyltransferase superfamily. Poxvirus/kinetoplastid 2'-O-MTase family. Interacts with poly(A) polymerase catalytic subunit OPG063. Interacts with OPG109 and OPG123; these interactions might help linking transcription to capping and polyadenylation.

Its subcellular location is the virion. The enzyme catalyses a 5'-end (N(7)-methyl 5'-triphosphoguanosine)-ribonucleoside in mRNA + S-adenosyl-L-methionine = a 5'-end (N(7)-methyl 5'-triphosphoguanosine)-(2'-O-methyl-ribonucleoside) in mRNA + S-adenosyl-L-homocysteine + H(+). Functionally, displays methyltransferase, positive regulation of the poly(A) polymerase and transcription elongation activities. Involved in the modification of both mRNA ends and in intermediate and late gene positive transcription elongation. At the mRNAs 5' end, methylates the ribose 2' OH group of the first transcribed nucleotide, thereby producing a 2'-O-methylpurine cap. At the 3' end, functions as a processivity factor which stimulates the activity of the viral poly(A) polymerase OPG063 that creates mRNA's poly(A) tail. In the presence of OPG102, OPG063 does not dissociate from the RNA allowing tail elongation to around 250 adenylates. The protein is Cap-specific mRNA (nucleoside-2'-O-)-methyltransferase (OPG102) of Sus scrofa (Pig).